We begin with the raw amino-acid sequence, 77 residues long: Conotoxin King-Kong 1 (77 aa).

The signal sequence occupies residues 1–22 (MKLTCMMIVAVLFLTAWTFATA). Positions 23–49 (DDSSNGLENLFSKAHHEMKNPEASKLN) are excised as a propeptide. 3 disulfide bridges follow: C52-C67, C59-C71, and C66-C76. Position 61 is a methionine sulfoxide; partial (M61).

Belongs to the conotoxin O1 superfamily. Expressed by the venom duct.

It localises to the secreted. In Conus textile (Cloth-of-gold cone), this protein is Conotoxin King-Kong 1.